The chain runs to 69 residues: Large ribosomal subunit protein bL28 (69 aa).

The tract at residues 1-27 (MSRRCSVSGKGPLVGNNVSHANNKTKR) is disordered.

This sequence belongs to the bacterial ribosomal protein bL28 family.

This chain is Large ribosomal subunit protein bL28, found in Sulfurovum sp. (strain NBC37-1).